The sequence spans 1195 residues: Phosphatidylinositol-3,5-bisphosphate 3-phosphatase MTMR4 (1195 aa).

Position 8 is a phosphoserine (serine 8). The 418-residue stretch at 153 to 570 (EHIRCRQEAE…RALHLWTAVY (418 aa)) folds into the Myotubularin phosphatase domain. Asparagine 320, asparagine 345, and isoleucine 346 together coordinate a 1,2-diacyl-sn-glycero-3-phospho-(1D-myo-inositol-3,5-bisphosphate). A 1,2-diacyl-sn-glycero-3-phospho-(1D-myo-inositol-3-phosphate)-binding residues include asparagine 320, asparagine 345, and isoleucine 346. Cysteine 407 acts as the Phosphocysteine intermediate in catalysis. 8 residues coordinate a 1,2-diacyl-sn-glycero-3-phospho-(1D-myo-inositol-3,5-bisphosphate): serine 408, aspartate 409, glycine 410, tryptophan 411, aspartate 412, arginine 413, lysine 449, and arginine 453. A 1,2-diacyl-sn-glycero-3-phospho-(1D-myo-inositol-3-phosphate)-binding residues include serine 408, aspartate 409, glycine 410, tryptophan 411, aspartate 412, and arginine 413. A 1,2-diacyl-sn-glycero-3-phospho-(1D-myo-inositol-3-phosphate) is bound at residue arginine 453. 2 positions are modified to phosphoserine: serine 610 and serine 629. Disordered regions lie at residues 645 to 756 (EPWH…EHCP), 780 to 800 (ESSQNSPTGTPQQAQPDSMLG), and 827 to 877 (DPST…LLEN). The segment covering 720–729 (PEIKVLEETK) has biased composition (basic and acidic residues). Composition is skewed to polar residues over residues 780–795 (ESSQNSPTGTPQQAQP) and 831–854 (DFLNQDPSGSVASISHQEQLSSVP). A PY-motif; substrate motif for NEDD4 motif is present at residues 1004–1008 (VPPLY). The stretch at 1023-1055 (HRLRQIEAGYKQEVEQLRRQVRELQMRLDIRHC) forms a coiled coil. The FYVE-type zinc finger occupies 1114–1174 (DHMASHCYNC…VCNSCYEHIQ (61 aa)). Positions 1120, 1123, 1136, 1139, 1144, 1147, 1166, and 1169 each coordinate Zn(2+).

The protein belongs to the protein-tyrosine phosphatase family. Non-receptor class myotubularin subfamily. In terms of assembly, homooligomeric. Forms MTMR3:MTMR4 heterooligomers; regulates the localization of both proteins. The MTMR3:MTMR4 heterooligomer can also recruit both CEP55 and PLK1; occurs during early mitosis, regulates the phosphorylation of CEP55 by PLK1 and its recruitment to the midbody where it can mediate cell abscission. Interacts with SMAD2 and SMAD3; negatively regulates TGF-beta signaling through SMAD2 and SMAD3 dephosphorylation and retention in endosomes. Interacts with SMAD1; negatively regulates BMP signaling through SMAD1 dephosphorylation and retention in endosomes. Post-translationally, ubiquitinated. Ubiquitination by NEDD4 probably leads to proteasomal degradation. Phosphorylated by CDK1 during mitosis. Expressed in brain, heart, kidney, spleen, liver, colon, testis, muscle, placenta, thyroid gland, pancreas, ovary, prostate, skin, peripheral blood, and bone marrow.

Its subcellular location is the early endosome membrane. It is found in the recycling endosome membrane. It localises to the late endosome membrane. The protein localises to the cytoplasmic vesicle. The protein resides in the phagosome membrane. It carries out the reaction a 1,2-diacyl-sn-glycero-3-phospho-(1D-myo-inositol-3-phosphate) + H2O = a 1,2-diacyl-sn-glycero-3-phospho-(1D-myo-inositol) + phosphate. The catalysed reaction is a 1,2-diacyl-sn-glycero-3-phospho-(1D-myo-inositol-3,5-bisphosphate) + H2O = a 1,2-diacyl-sn-glycero-3-phospho-(1D-myo-inositol-5-phosphate) + phosphate. The enzyme catalyses 1,2-dioctanoyl-sn-glycero-3-phospho-(1-D-myo-inositol-3-phosphate) + H2O = 1,2-dioctanoyl-sn-glycero-3-phospho-(1D-myo-inositol) + phosphate. It catalyses the reaction 1,2-dioctanoyl-sn-glycero-3-phospho-(1D-myo-inositol-3,5-bisphosphate) + H2O = 1,2-dioctanoyl-sn-glycero-3-phospho-(1D-myo-inositol-5-phosphate) + phosphate. With respect to regulation, the phosphatidylinositol-3-phosphate phosphatase activity is inhibited by vanadate. Functionally, lipid phosphatase that specifically dephosphorylates the D-3 position of phosphatidylinositol 3-phosphate and phosphatidylinositol 3,5-bisphosphate, generating phosphatidylinositol and phosphatidylinositol 5-phosphate. Decreases the levels of phosphatidylinositol 3-phosphate, a phospholipid found in cell membranes where it acts as key regulator of both cell signaling and intracellular membrane traffic, in a subset of endosomal membranes to negatively regulate both endocytic recycling and trafficking and/or maturation of endosomes toward lysosomes. Through phosphatidylinositol 3-phosphate turnover in phagosome membranes regulates phagocytosis and phagosome maturation. By decreasing phosphatidylinositol 3-monophosphate (PI3P) levels in immune cells it can also regulate the innate immune response. Beside its lipid phosphatase activity, can also function as a molecular adapter to regulate midbody abscission during mitotic cytokinesis. Can also negatively regulate TGF-beta and BMP signaling through Smad proteins dephosphorylation and retention in endosomes. The polypeptide is Phosphatidylinositol-3,5-bisphosphate 3-phosphatase MTMR4 (Homo sapiens (Human)).